We begin with the raw amino-acid sequence, 295 residues long: Hepatic leukemia factor (295 aa).

Residues 36–52 show a composition bias toward basic and acidic residues; it reads PEDAFSKEKDKGKKLDD. Disordered stretches follow at residues 36–76 and 92–149; these read PEDA…TLPY and LSEN…SPIR. One can recognise a bZIP domain in the interval 225–288; the sequence is DDKYWARRRK…GKCKNILAKY (64 aa). The segment at 227–247 is basic motif; that stretch reads KYWARRRKNNMAAKRSRDARR. Residues 248–255 are leucine-zipper; the sequence is LKENQIAI.

Belongs to the bZIP family. PAR subfamily. Binds DNA specifically as homodimer or heterodimer with other PAR factors.

It localises to the nucleus. This is Hepatic leukemia factor (Hlf) from Mus musculus (Mouse).